The chain runs to 152 residues: MTSPDHWLKLERQVHFGDTDAAGVMHFHQLLRWCHEAWEESLERYGIAAGSVFPGCRGQQRWPAVALPVVHCQADFKRPVHGSDRLQVHLKPQRLDPGCFEVRSEFHLDATVMACGLVRHLAIHSDSRERCALPETVDLWLEASALGQITSL.

Residue aspartate 20 is part of the active site.

It belongs to the 4-hydroxybenzoyl-CoA thioesterase family. DHNA-CoA hydrolase subfamily.

It carries out the reaction 1,4-dihydroxy-2-naphthoyl-CoA + H2O = 1,4-dihydroxy-2-naphthoate + CoA + H(+). It participates in cofactor biosynthesis; phylloquinone biosynthesis. Its pathway is quinol/quinone metabolism; 1,4-dihydroxy-2-naphthoate biosynthesis; 1,4-dihydroxy-2-naphthoate from chorismate: step 7/7. Functionally, catalyzes the hydrolysis of 1,4-dihydroxy-2-naphthoyl-CoA (DHNA-CoA) to 1,4-dihydroxy-2-naphthoate (DHNA), a reaction involved in phylloquinone (vitamin K1) biosynthesis. This Parasynechococcus marenigrum (strain WH8102) protein is 1,4-dihydroxy-2-naphthoyl-CoA hydrolase.